We begin with the raw amino-acid sequence, 425 residues long: Enolase (425 aa).

Q162 serves as a coordination point for (2R)-2-phosphoglycerate. The active-site Proton donor is the E204. The Mg(2+) site is built by D241, E288, and D315. 4 residues coordinate (2R)-2-phosphoglycerate: K340, R369, S370, and K391. Catalysis depends on K340, which acts as the Proton acceptor.

The protein belongs to the enolase family. Mg(2+) is required as a cofactor.

It is found in the cytoplasm. The protein localises to the secreted. The protein resides in the cell surface. It catalyses the reaction (2R)-2-phosphoglycerate = phosphoenolpyruvate + H2O. The protein operates within carbohydrate degradation; glycolysis; pyruvate from D-glyceraldehyde 3-phosphate: step 4/5. In terms of biological role, catalyzes the reversible conversion of 2-phosphoglycerate (2-PG) into phosphoenolpyruvate (PEP). It is essential for the degradation of carbohydrates via glycolysis. In Porphyromonas gingivalis (strain ATCC 33277 / DSM 20709 / CIP 103683 / JCM 12257 / NCTC 11834 / 2561), this protein is Enolase.